Reading from the N-terminus, the 232-residue chain is Large ribosomal subunit protein uL1 (232 aa).

This sequence belongs to the universal ribosomal protein uL1 family. As to quaternary structure, part of the 50S ribosomal subunit.

Its function is as follows. Binds directly to 23S rRNA. The L1 stalk is quite mobile in the ribosome, and is involved in E site tRNA release. Functionally, protein L1 is also a translational repressor protein, it controls the translation of the L11 operon by binding to its mRNA. This Porphyromonas gingivalis (strain ATCC 33277 / DSM 20709 / CIP 103683 / JCM 12257 / NCTC 11834 / 2561) protein is Large ribosomal subunit protein uL1.